A 142-amino-acid chain; its full sequence is Large ribosomal subunit protein uL11 (142 aa).

It belongs to the universal ribosomal protein uL11 family. Part of the ribosomal stalk of the 50S ribosomal subunit. Interacts with L10 and the large rRNA to form the base of the stalk. L10 forms an elongated spine to which L12 dimers bind in a sequential fashion forming a multimeric L10(L12)X complex. In terms of processing, one or more lysine residues are methylated.

In terms of biological role, forms part of the ribosomal stalk which helps the ribosome interact with GTP-bound translation factors. This Pasteurella multocida (strain Pm70) protein is Large ribosomal subunit protein uL11.